The primary structure comprises 541 residues: Coiled-coil domain-containing protein 116 (541 aa).

Residues 79–102 (QVLDSLQTVVEQATERLAAMKTEA) are a coiled coil. The segment at 346 to 397 (LPGNSDLLQPSSKASIPTNREARGEPCDSLTTAYSPKTSHRKSKGRRGSPPN) is disordered. Residues 351–363 (DLLQPSSKASIPT) are compositionally biased toward polar residues. Over residues 383–392 (TSHRKSKGRR) the composition is skewed to basic residues. At Ser-394 the chain carries Phosphoserine.

The protein localises to the cytoplasm. The protein resides in the cytoskeleton. Its subcellular location is the microtubule organizing center. It is found in the centrosome. This chain is Coiled-coil domain-containing protein 116 (Ccdc116), found in Mus musculus (Mouse).